The sequence spans 253 residues: Aminoglycoside nucleotidyltransferase (4') (253 aa).

The N-terminal domain stretch occupies residues 1 to 127 (MNGPIIMTRE…KVYQTAKSVE (127 aa)). Residues Ser39, Arg42, Ser49, Asp50, and Glu52 each contribute to the ATP site. Mg(2+) is bound by residues Asp50 and Glu52. Neomycin B is bound by residues Glu52 and Glu67. Kanamycin A is bound by residues Glu67, Lys74, Glu76, Glu141, and Glu145. The interval 128–241 (AQTFHDAICA…NGIQEWTERH (114 aa)) is C-terminal domain. ATP contacts are provided by Glu145, Lys149, and Thr187. Residue Glu145 participates in Mg(2+) binding. The active-site Proton acceptor is Glu145.

As to quaternary structure, homodimer. Mg(2+) is required as a cofactor.

It carries out the reaction amikacin + ATP = 4'-adenylylamikacin + diphosphate. It catalyses the reaction kanamycin A + ATP = 4'-adenylylkanamycin A + diphosphate. The enzyme catalyses neomycin B + ATP = 4'-adenylylneomycin B + diphosphate. The catalysed reaction is paromomycin + ATP = 4'-adenylylparomomycin + diphosphate. It carries out the reaction ribostamycin + ATP = 4'-adenylylribostamycin + diphosphate. It catalyses the reaction tobramycin + ATP = 4'-adenylyltobramycin + diphosphate. The enzyme catalyses kanamycin A + CTP = 4'-cytidylylkanamycin A + diphosphate. The catalysed reaction is kanamycin A + GTP = 4'-guanylylkanamycin A + diphosphate. It carries out the reaction kanamycin A + ITP = 4'-inosinylylkanamycin A + diphosphate. It catalyses the reaction dTTP + kanamycin A = 4'-thymidylylkanamycin A + diphosphate. The enzyme catalyses kanamycin A + UTP = 4'-uridylylkanamycin A + diphosphate. The catalysed reaction is kanamycin A + dATP = 4'-(2'-deoxyadenylyl)kanamycin A + diphosphate. It carries out the reaction kanamycin A + dCTP = 4'-(2'-deoxycytidylyl)kanamycin A + diphosphate. It catalyses the reaction kanamycin A + dGTP = 4'-(2'-deoxyguanylyl)kanamycin A + diphosphate. The enzyme catalyses dUTP + kanamycin A = 4'-(2'-deoxyuridylyl)kanamycin A + diphosphate. The catalysed reaction is amikacin + GTP = 4'-guanylylamikacin + diphosphate. It carries out the reaction amikacin + ITP = 4'-inosinylylamikacin + diphosphate. It catalyses the reaction amikacin + CTP = 4'-cytidylylamikacin + diphosphate. The enzyme catalyses amikacin + UTP = 4'-uridylylamikacin + diphosphate. The catalysed reaction is amikacin + dTTP = 4'-thymidylylamikacin + diphosphate. Inactivates aminoglycoside antibiotics such as kanamycin by catalyzing the transfer of a nucleotidyl group from a wide variety of nucleoside triphosphates ((d)ATP, (d)CTP, (d)GTP, ITP, TTP and (d)UTP) to the 4'-hydroxyl group of the aminoglycoside. In vitro, antibiotics without the 4'-hydroxyl but possessing a 4''-hydroxyl group (e.g. sisomicin and gentamicin) are also modifed but with poor specificity. The 3' position of the NTP ribose ring does not tolerate large substitutions (e.g. ddATP) and dNTPs and TTP are better substrates than their NTP counterparts. A short (2.35 Angstrom) hydrogen bond initially facilitates tight binding of the substrate (between Glu-52 and antibiotic) that is subsequently disrupted by the assembly of the active ternary complex. This enables the release of products post-catalysis, a 'catch and release' mechanism. The polypeptide is Aminoglycoside nucleotidyltransferase (4') (knt) (Staphylococcus aureus).